Consider the following 154-residue polypeptide: 17.4 kDa class I heat shock protein (154 aa).

A sHSP domain is found at 40 to 154; it reads DAAAFAGARI…PDVKSIQITG (115 aa).

The protein belongs to the small heat shock protein (HSP20) family. May form oligomeric structures.

Its subcellular location is the cytoplasm. In Oryza sativa subsp. japonica (Rice), this protein is 17.4 kDa class I heat shock protein (HSP17.4).